A 143-amino-acid polypeptide reads, in one-letter code: Deoxyuridine 5'-triphosphate nucleotidohydrolase (143 aa).

Substrate is bound by residues 63–65 (RSG), asparagine 76, 80–82 (TID), and lysine 90.

Belongs to the dUTPase family. It depends on Mg(2+) as a cofactor.

It carries out the reaction dUTP + H2O = dUMP + diphosphate + H(+). Its pathway is pyrimidine metabolism; dUMP biosynthesis; dUMP from dCTP (dUTP route): step 2/2. In terms of biological role, this enzyme is involved in nucleotide metabolism: it produces dUMP, the immediate precursor of thymidine nucleotides and it decreases the intracellular concentration of dUTP so that uracil cannot be incorporated into DNA. The polypeptide is Deoxyuridine 5'-triphosphate nucleotidohydrolase (Clostridioides difficile (Peptoclostridium difficile)).